We begin with the raw amino-acid sequence, 307 residues long: Ribonuclease H2 subunit B (307 aa).

A2 carries the post-translational modification N-acetylalanine. At K291 the chain carries N6-acetyllysine. The residue at position 292 (S292) is a Phosphoserine.

It belongs to the RNase H2 subunit B family. In terms of assembly, the RNase H2 complex is a heterotrimer composed of the catalytic subunit RNASEH2A and the non-catalytic subunits RNASEH2B and RNASEH2C.

Its subcellular location is the nucleus. In terms of biological role, non catalytic subunit of RNase H2, an endonuclease that specifically degrades the RNA of RNA:DNA hybrids. Participates in DNA replication, possibly by mediating the removal of lagging-strand Okazaki fragment RNA primers during DNA replication. Mediates the excision of single ribonucleotides from DNA:RNA duplexes. The sequence is that of Ribonuclease H2 subunit B (Rnaseh2b) from Rattus norvegicus (Rat).